Reading from the N-terminus, the 126-residue chain is Chemocyanin (126 aa).

A signal peptide spans Met1–Ser30. Residues Val31–Ala126 form the Phytocyanin domain. Positions 69, 109, and 114 each coordinate Cu cation. A disulfide bond links Cys82 and Cys115.

Strongly expressed in stigma and style and to a lesser extent in leaves, ovary and petals. Not detected in pollen tubes, mature anthers or roots.

Diffusible chemotropic factor that induces pollen tube chemotropism. This is Chemocyanin from Lilium longiflorum (Trumpet lily).